Reading from the N-terminus, the 627-residue chain is Carene synthase 2, chloroplastic (627 aa).

A chloroplast-targeting transit peptide spans 1–36; the sequence is MSVISIVPLASKSCLYKSLMSSTHELKALCRPIVTL. D378, D382, and D530 together coordinate Mg(2+). The DDXXD motif motif lies at 378 to 382; the sequence is DDMYD.

The protein belongs to the terpene synthase family. Tpsd subfamily. The cofactor is Mg(2+). Mn(2+) serves as cofactor.

Its subcellular location is the plastid. It is found in the chloroplast. It carries out the reaction (2E)-geranyl diphosphate = (+)-car-3-ene + diphosphate. It functions in the pathway terpene metabolism; oleoresin biosynthesis. Its function is as follows. Terpene synthase (TPS) involved in defensive oleoresin formation in conifers in response to insect attack (e.g. white pine weevil P.strobi) or other injury. In Picea sitchensis (Sitka spruce), this protein is Carene synthase 2, chloroplastic (TPS-3car2).